The following is a 669-amino-acid chain: Beta-galactosidase (669 aa).

Residues 1 to 24 (MDFPGAARLLSLLLVPLLLGPARG) form the signal peptide. Positions 25–29 (LRNAS) are excised as a propeptide. The N-linked (GlcNAc...) asparagine glycan is linked to Asn27. Substrate is bound by residues Tyr84, Glu130, and Asn188. Glu189 acts as the Proton donor in catalysis. Residues Cys196 and Cys231 are joined by a disulfide bond. N-linked (GlcNAc...) asparagine glycosylation is present at Asn248. Catalysis depends on Glu269, which acts as the Nucleophile. Tyr334 provides a ligand contact to substrate. N-linked (GlcNAc...) asparagine glycosylation is found at Asn465, Asn499, Asn547, and Asn557. A disulfide bridge links Cys628 with Cys636. Residues 649 to 669 (TPTSSHPLPDLSDRDSGWDRV) are disordered. Over residues 659–669 (LSDRDSGWDRV) the composition is skewed to basic and acidic residues.

The protein belongs to the glycosyl hydrolase 35 family. In terms of assembly, homodimer. May form higher multimers.

The protein localises to the lysosome. The catalysed reaction is Hydrolysis of terminal non-reducing beta-D-galactose residues in beta-D-galactosides.. Its function is as follows. Cleaves beta-linked terminal galactosyl residues from gangliosides, glycoproteins, and glycosaminoglycans. The polypeptide is Beta-galactosidase (GLB1) (Felis catus (Cat)).